A 202-amino-acid polypeptide reads, in one-letter code: CASP-like protein 2B2 (202 aa).

Residues 1 to 29 are Cytoplasmic-facing; that stretch reads MSYLGVGVSPGNVPVYHGMNLKVIDRRVR. The chain crosses the membrane as a helical span at residues 30-50; it reads LAELVLRCVICALGVLAAVLV. The Extracellular portion of the chain corresponds to 51–72; the sequence is GTDTQVKEIFSIQKKARFTDMK. The chain crosses the membrane as a helical span at residues 73 to 93; that stretch reads ALVFLVVANGIAAAYSLVQGV. At 94–118 the chain is on the cytoplasmic side; the sequence is RCVVGMVKGSVLFSKPLAWVIFSGD. A helical transmembrane segment spans residues 119 to 139; that stretch reads QMMAYLTLSAVAAAVQSASFA. Residues 140 to 164 are Extracellular-facing; it reads KLGQPDLQWMKICNMYGKFCNQVGE. The helical transmembrane segment at 165-185 threads the bilayer; sequence GIASALLVSVSMVVLSCISSF. Residues 186 to 202 are Cytoplasmic-facing; sequence SLFRLYGGNKGKDGARW.

This sequence belongs to the Casparian strip membrane proteins (CASP) family. In terms of assembly, homodimer and heterodimers.

The protein resides in the cell membrane. The sequence is that of CASP-like protein 2B2 from Populus trichocarpa (Western balsam poplar).